The chain runs to 66 residues: Sarcoplasmic/endoplasmic reticulum calcium ATPase regulator ARLN (66 aa).

At Met1 the chain carries N-acetylmethionine. The disordered stretch occupies residues Met1–Asn37. A compositionally biased stretch (basic and acidic residues) spans Asp9–Phe20. A helical membrane pass occupies residues Trp45–Leu65.

In terms of assembly, homooligomer. Can also form heterooligomers with other sarcoplasmic/endoplasmic reticulum calcium ATPase (SERCA) regulators ERLN, PLN, SLN and STRIT1/DWORF. Monomer. Interacts as a monomer with ATP2A2/SERCA2; the interaction results in inhibition of ATP2A2 Ca(2+) affinity.

The protein resides in the endoplasmic reticulum membrane. Functionally, inhibits the activity of the calcium ATPases ATP2A2/SERCA2 and ATP2A3/SERCA3 by decreasing their apparent affinity for Ca(2+). This chain is Sarcoplasmic/endoplasmic reticulum calcium ATPase regulator ARLN, found in Homo sapiens (Human).